The chain runs to 900 residues: Suppressor of activated egl-4 protein 1 (900 aa).

Disordered regions lie at residues 1 to 75, 340 to 380, and 406 to 425; these read MPPP…HLPT, PVAE…SRKN, and WAST…ESLE. A compositionally biased stretch (polar residues) spans 53 to 75; it reads ASGQQHRPSIMSGQSHQNNHLPT. 2 stretches are compositionally biased toward basic and acidic residues: residues 358 to 377 and 412 to 425; these read GDMK…DGPS and ADEK…ESLE. In terms of domain architecture, ELM2 spans 451-544; the sequence is PHINLGKNYQ…AAVEDLLRSD (94 aa). The SANT domain maps to 560–611; that stretch reads NDSVLWTPDEIYQFQDAIYQSEKDFDKVAVELPGKSVKECVQFYYTWKKDCP. Residues 710 to 729 form a disordered region; it reads PTAPRAHHTPSASASKKGAQ. Residues 736–758 form a C2H2-type zinc finger; sequence FHCRLCDKCFEKVKSLNAHMKSH.

As to quaternary structure, may be a component of a histone deacetylase complex containing saeg-2, saeg-1 and hda-2. May interact with egl-4. As to expression, ubiquitously expressed.

It is found in the nucleus. Its function is as follows. As a likely component of a histone deacetylase complex, together with saeg-2 and hda-2, functions downstream of the cAMP-dependent kinase egl-4 to regulate the expression of genes required for egg-laying and foraging. This Caenorhabditis elegans protein is Suppressor of activated egl-4 protein 1.